Here is a 97-residue protein sequence, read N- to C-terminus: Probable lipopolysaccharide assembly protein A (97 aa).

Helical transmembrane passes span 1 to 21 (MIKY…AITI) and 46 to 66 (VAIL…FFYI). The stretch at 67 to 95 (KLKLKNMALARQVKRQTLQINELTTTRDK) forms a coiled coil.

Belongs to the LapA family.

It is found in the cell inner membrane. In terms of biological role, involved in the assembly of lipopolysaccharide (LPS). This chain is Probable lipopolysaccharide assembly protein A, found in Haemophilus influenzae (strain ATCC 51907 / DSM 11121 / KW20 / Rd).